The chain runs to 157 residues: Large ribosomal subunit protein uL15 (157 aa).

The disordered stretch occupies residues 1 to 41 (MKLHELSDNPGATKKRKRVGRGPGSGTGKMGGRGIKGQKSR). Gly residues predominate over residues 21–35 (RGPGSGTGKMGGRGI).

Belongs to the universal ribosomal protein uL15 family. As to quaternary structure, part of the 50S ribosomal subunit.

Its function is as follows. Binds to the 23S rRNA. The chain is Large ribosomal subunit protein uL15 from Jannaschia sp. (strain CCS1).